Reading from the N-terminus, the 155-residue chain is DNA polymerase epsilon subunit 4 (155 aa).

2 stretches are compositionally biased toward acidic residues: residues 1–16 and 24–48; these read MASEELFEAEFSEEQD and ETEEAELAETEEPLEITEESPDNPE. The interval 1–76 is disordered; it reads MASEELFEAE…APADNEAKMT (76 aa). Residues 49 to 65 are compositionally biased toward polar residues; it reads AESTTEQLTEKPVTNGN.

In terms of assembly, component of the DNA polymerase epsilon complex consisting of four subunits: the catalytic subunit PolE1/DNApol-epsilon255 and the accessory subunits PolE2/DNApol-epsilon58, Chrac-14/DNApolE3 and PolE4/Mes4.

It localises to the nucleus. In terms of biological role, accessory component of the DNA polymerase epsilon complex. Participates in DNA repair and in chromosomal DNA replication. Has a role in cell cycle progression. Required for wing morphogenesis. The polypeptide is DNA polymerase epsilon subunit 4 (Drosophila melanogaster (Fruit fly)).